The primary structure comprises 75 residues: Small ribosomal subunit protein bS18c (75 aa).

The protein belongs to the bacterial ribosomal protein bS18 family. In terms of assembly, part of the 30S ribosomal subunit.

The protein localises to the plastid. It is found in the chloroplast. The protein is Small ribosomal subunit protein bS18c (rps18) of Anthoceros angustus (Hornwort).